A 219-amino-acid chain; its full sequence is Ras-related protein Rab-3D (219 aa).

An N-acetylalanine modification is found at Ala-2. GDP is bound at residue 29 to 37 (GNSSVGKTS). The GTP site is built by Ser-31, Ser-32, Val-33, Gly-34, Lys-35, Thr-36, Ser-37, Pro-49, and Ser-53. Thr-36 contacts Mg(2+). The short motif at 49–58 (PAFVSTVGID) is the Switch 1 element. Mg(2+)-binding residues include Thr-54 and Asp-77. Gly-80 is a binding site for GTP. The short motif at 80 to 96 (GQERYRTITTAYYRGAM) is the Switch 2 element. Thr-86 carries the phosphothreonine; by LRRK2 modification. Positions 135, 136, 138, 166, and 167 each coordinate GTP. GDP-binding positions include 135 to 138 (NKCD) and 165 to 167 (SAK). Residue Ser-190 is modified to Phosphoserine. Positions 190-219 (SLEPSSSPGSNGKGPALGDTPPPQPSSCSC) are disordered. The span at 193–203 (PSSSPGSNGKG) shows a compositional bias: low complexity. The segment covering 209-219 (TPPPQPSSCSC) has biased composition (pro residues). S-geranylgeranyl cysteine attachment occurs at residues Cys-217 and Cys-219. Cys-219 carries the post-translational modification Cysteine methyl ester.

This sequence belongs to the small GTPase superfamily. Rab family. As to quaternary structure, interacts with RIMS1, RIMS2, RPH3A, RPH3AL and RAB3IP. The GTP-bound form interacts with REP15. Interacts with CHM and CHML; phosphorylation at Thr-86 disrupts these interactions. Interacts with MADD (via uDENN domain); the GTP-bound form is preferred for interaction. Mg(2+) serves as cofactor. In terms of processing, phosphorylation of Thr-86 in the switch II region by LRRK2 prevents the association of RAB regulatory proteins, including CHM and CHML. As to expression, predominantly expressed in the adipocyte tissue, but is also expressed in several other organs including skin, spleen, heart and lung.

The protein resides in the cell membrane. The catalysed reaction is GTP + H2O = GDP + phosphate + H(+). Its activity is regulated as follows. Regulated by guanine nucleotide exchange factors (GEFs) which promote the exchange of bound GDP for free GTP. Regulated by GTPase activating proteins (GAPs) which increase the GTP hydrolysis activity. Inhibited by GDP dissociation inhibitors (GDIs) which prevent Rab-GDP dissociation. The small GTPases Rab are key regulators of intracellular membrane trafficking, from the formation of transport vesicles to their fusion with membranes. Rabs cycle between an inactive GDP-bound form and an active GTP-bound form that is able to recruit to membranes different sets of downstream effectors directly responsible for vesicle formation, movement, tethering and fusion. RAB3D may be involved in the insulin-induced exocytosis of GLUT4-containing vesicles in adipocytes. In Mus musculus (Mouse), this protein is Ras-related protein Rab-3D.